The primary structure comprises 206 residues: Large ribosomal subunit protein uL4 (206 aa).

The disordered stretch occupies residues R42 to R94. Residues Y64–A77 show a composition bias toward basic residues.

This sequence belongs to the universal ribosomal protein uL4 family. Part of the 50S ribosomal subunit.

Its function is as follows. One of the primary rRNA binding proteins, this protein initially binds near the 5'-end of the 23S rRNA. It is important during the early stages of 50S assembly. It makes multiple contacts with different domains of the 23S rRNA in the assembled 50S subunit and ribosome. Functionally, forms part of the polypeptide exit tunnel. The chain is Large ribosomal subunit protein uL4 from Brucella abortus biovar 1 (strain 9-941).